The chain runs to 426 residues: Serine--tRNA ligase (426 aa).

231-233 (TAE) serves as a coordination point for L-serine. 262 to 264 (RSE) contacts ATP. Glu285 serves as a coordination point for L-serine. Position 349-352 (349-352 (EISS)) interacts with ATP. Residue Ser385 coordinates L-serine.

The protein belongs to the class-II aminoacyl-tRNA synthetase family. Type-1 seryl-tRNA synthetase subfamily. As to quaternary structure, homodimer. The tRNA molecule binds across the dimer.

It localises to the cytoplasm. It carries out the reaction tRNA(Ser) + L-serine + ATP = L-seryl-tRNA(Ser) + AMP + diphosphate + H(+). It catalyses the reaction tRNA(Sec) + L-serine + ATP = L-seryl-tRNA(Sec) + AMP + diphosphate + H(+). Its pathway is aminoacyl-tRNA biosynthesis; selenocysteinyl-tRNA(Sec) biosynthesis; L-seryl-tRNA(Sec) from L-serine and tRNA(Sec): step 1/1. Functionally, catalyzes the attachment of serine to tRNA(Ser). Is also able to aminoacylate tRNA(Sec) with serine, to form the misacylated tRNA L-seryl-tRNA(Sec), which will be further converted into selenocysteinyl-tRNA(Sec). The polypeptide is Serine--tRNA ligase (Teredinibacter turnerae (strain ATCC 39867 / T7901)).